The sequence spans 836 residues: Translation initiation factor IF-2 (836 aa).

The interval 1–234 (MSDTDGKKPL…SLAAMKRKQE (234 aa)) is disordered. Residues 18–27 (SGQVKQSFSH) are compositionally biased toward polar residues. The span at 50–60 (SGSSTTTSSPS) shows a compositional bias: low complexity. Residues 88-156 (KLREVEDAKR…ATRRAEEAKR (69 aa)) are compositionally biased toward basic and acidic residues. Positions 167 to 176 (PAESRASAPP) are enriched in low complexity. Basic and acidic residues predominate over residues 185–206 (SRKEREREADRDRTTKKDDSRR). In terms of domain architecture, tr-type G spans 333-501 (PRPPIITIMG…NIALQAEILD (169 aa)). The tract at residues 342–349 (GHVDHGKT) is G1. Residue 342-349 (GHVDHGKT) coordinates GTP. Residues 367 to 371 (GITQH) form a G2 region. The tract at residues 389 to 392 (DTPG) is G3. Residues 389–393 (DTPGH) and 443–446 (NKID) each bind GTP. The G4 stretch occupies residues 443-446 (NKID). Residues 479–481 (SAK) form a G5 region.

It belongs to the TRAFAC class translation factor GTPase superfamily. Classic translation factor GTPase family. IF-2 subfamily.

The protein resides in the cytoplasm. In terms of biological role, one of the essential components for the initiation of protein synthesis. Protects formylmethionyl-tRNA from spontaneous hydrolysis and promotes its binding to the 30S ribosomal subunits. Also involved in the hydrolysis of GTP during the formation of the 70S ribosomal complex. This chain is Translation initiation factor IF-2, found in Cereibacter sphaeroides (strain ATCC 17029 / ATH 2.4.9) (Rhodobacter sphaeroides).